The sequence spans 290 residues: 4-diphosphocytidyl-2-C-methyl-D-erythritol kinase (290 aa).

Lysine 13 is a catalytic residue. Residue 96-106 participates in ATP binding; the sequence is PMGGGIGGGSS. Aspartate 138 is a catalytic residue.

This sequence belongs to the GHMP kinase family. IspE subfamily.

It carries out the reaction 4-CDP-2-C-methyl-D-erythritol + ATP = 4-CDP-2-C-methyl-D-erythritol 2-phosphate + ADP + H(+). It functions in the pathway isoprenoid biosynthesis; isopentenyl diphosphate biosynthesis via DXP pathway; isopentenyl diphosphate from 1-deoxy-D-xylulose 5-phosphate: step 3/6. Its function is as follows. Catalyzes the phosphorylation of the position 2 hydroxy group of 4-diphosphocytidyl-2C-methyl-D-erythritol. The chain is 4-diphosphocytidyl-2-C-methyl-D-erythritol kinase from Vibrio vulnificus (strain CMCP6).